A 202-amino-acid polypeptide reads, in one-letter code: Endothelin-1 (202 aa).

Positions Met-1 to Gly-25 are cleaved as a signal peptide. Residues Ala-26 to Ser-50 constitute a propeptide that is removed on maturation. 2 disulfide bridges follow: Cys-53–Cys-67 and Cys-55–Cys-63. Positions Val-74–His-202 are excised as a propeptide. Positions Cys-110–Cys-124 are endothelin-like.

The protein belongs to the endothelin/sarafotoxin family. In terms of tissue distribution, highest expression in the adult is in lung. Lower levels found in heart, kidney, brain and intestine. In the embryo, expressed in outer and inner pharyngeal arch surfaces. Also expressed in endothelium of dorsal aorta and arch arteries, and in epithelium of pharyngeal pouches.

It is found in the secreted. In terms of biological role, endothelins are endothelium-derived vasoconstrictor peptides. Probable ligand for G-protein coupled receptors EDNRA and EDNRB which activates PTK2B, BCAR1, BCAR3 and, GTPases RAP1 and RHOA cascade in glomerular mesangial cells. Also binds the DEAR/FBXW7-AS1 receptor. Promotes mesenteric arterial wall remodeling via activation of ROCK signaling and subsequent colocalization of NFATC3 with F-actin filaments. NFATC3 then translocates to the nucleus where it subsequently promotes the transcription of the smooth muscle hypertrophy and differentiation marker ACTA2. This chain is Endothelin-1 (Edn1), found in Mus musculus (Mouse).